Reading from the N-terminus, the 2565-residue chain is Transformation/transcription domain-associated protein (2565 aa).

Phosphoserine occurs at positions 328, 749, and 775. Residues 710–1087 (SEVVIKWELQ…SPMAANQTPT (378 aa)) form an interaction with TP53 region. The Bipartite nuclear localization signal motif lies at 745 to 760 (KRGLSVDSAQEVKRFR). Lys1242 is covalently cross-linked (Glycyl lysine isopeptide (Lys-Gly) (interchain with G-Cter in SUMO2)). Residues 1242–1253 (KQEPRERENSES) are compositionally biased toward basic and acidic residues. Residues 1242 to 1277 (KQEPRERENSESKEEDVEIDIELAPGDQTSTPKTKE) are disordered. One can recognise an FAT domain in the interval 1391-1963 (VLKYLGKTHN…YFPIRTLYLT (573 aa)). N6-acetyllysine is present on Lys1766. The disordered stretch occupies residues 1973–1995 (KSDSGQQQPSSAGNQSHSASDPG). A compositionally biased stretch (polar residues) spans 1975–1991 (DSGQQQPSSAGNQSHSA). Residues 2206–2529 (MPRVEIVQKH…AVTAIMTRLH (324 aa)) enclose the PI3K/PI4K catalytic domain. The interval 2212-2218 (VQKHNTA) is G-loop. The segment at 2393 to 2401 (HLNRLNPEM) is catalytic loop. The tract at residues 2413-2438 (VAYFRFDINDATGDLDANRPVPFRLT) is activation loop. The 33-residue stretch at 2533–2565 (QFDGGESKVNTLVAAANSLDNLCRMDPAWHPWL) folds into the FATC domain.

Belongs to the PI3/PI4-kinase family. TRA1 subfamily. As to quaternary structure, interacts with MYC, E2F1 and E2F4 transcription factors. Interacts directly with p53/TP53. Interacts with GCN5L2. Component of various HAT complexes. Component of the PCAF complex, at least composed of TADA2L/ADA2, SUPT3H, TADA3L/ADA3, TAF5L/PAF65-beta, TAF6L/PAF65-alpha, TAF10/TAFII30, TAF12/TAFII20, TAF9/TAFII31 and TRRAP. Component of the TFTC-HAT complex, at least composed of TAF5L, TAF6L, TADA3L, SUPT3H/SPT3, TAF2/TAFII150, TAF4/TAFII135, TAF5/TAFII100, GCN5L2/GCN5, TAF10 and TRRAP. Component of the NuA4 histone acetyltransferase complex which contains the catalytic subunit KAT5/TIP60 and the subunits EP400, TRRAP/PAF400, BRD8/SMAP, EPC1, DMAP1/DNMAP1, RUVBL1/TIP49, RUVBL2, ING3, actin, ACTL6A/BAF53A, MORF4L1/MRG15, MORF4L2/MRGX, MRGBP, YEATS4/GAS41, VPS72/YL1 and MEAF6. Component of the STAGA complex, at least composed of SUPT3H, GCN5L2, SUPT7L, TAF5L, TAF6L, TADA3L, TAD1L, TAF10, TAF12, TRRAP and TAF9. The STAGA core complex is associated with a subcomplex required for histone deubiquitination composed of ATXN7L3, ENY2 and USP22. Component of the BAF53 complex, at least composed of BAF53A, RUVBL1, SMARCA4/BRG1, and TRRAP, which preferentially acetylates histone H4 (and H2A) within nucleosomes. Interacts with NPAT. Interaction with TELO2 and TTI1. Component of a SWR1-like complex. Expressed in the cochlea.

It localises to the nucleus. In terms of biological role, adapter protein, which is found in various multiprotein chromatin complexes with histone acetyltransferase activity (HAT), which gives a specific tag for epigenetic transcription activation. Component of the NuA4 histone acetyltransferase complex which is responsible for acetylation of nucleosomal histones H4 and H2A. Plays a central role in MYC transcription activation, and also participates in cell transformation by MYC. Required for p53/TP53-, E2F1- and E2F4-mediated transcription activation. Probably acts by linking transcription factors such as E1A, MYC or E2F1 to HAT complexes such as STAGA thereby allowing transcription activation. Probably not required in the steps following histone acetylation in processes of transcription activation. May be required for the mitotic checkpoint and normal cell cycle progression. Component of a SWR1-like complex that specifically mediates the removal of histone H2A.Z/H2AZ1 from the nucleosome. May play a role in the formation and maintenance of the auditory system. The protein is Transformation/transcription domain-associated protein (Trrap) of Mus musculus (Mouse).